The primary structure comprises 601 residues: Transcription factor Ken (601 aa).

The 69-residue stretch at 33–101 folds into the BTB domain; the sequence is ADLTIVCENK…LYSGQTCITS (69 aa). Disordered regions lie at residues 188–276, 331–365, and 471–491; these read AAEC…TINP, LSDG…DNQP, and DHPE…AGSN. 2 stretches are compositionally biased toward basic and acidic residues: residues 190-200 and 207-216; these read ECERSGGHNNK and CTHKDNKSDK. Polar residues predominate over residues 223–234; that stretch reads NLSNAPPSGTSG. Positions 235 to 247 are enriched in low complexity; that stretch reads SNSNISTSSNHQQ. The span at 248 to 258 shows a compositional bias: basic residues; that stretch reads QQHHHHHHHNH. Residues 259 to 275 show a composition bias toward low complexity; sequence NNNNNNNNNNSSSSTIN. Positions 476–490 are enriched in low complexity; it reads RSGSASGSGANLAGS. 3 C2H2-type zinc fingers span residues 500–522, 528–551, and 567–590; these read YRCE…LRVH, FACR…CSVH, and YSCC…SGHH.

In terms of tissue distribution, expressed from stage 5 in two rather faint stripes at positions of 64% (anterior domain; AD) and 17% (posterior domain; PD) egg length. During early gastrulation, at stage 6, these two stripes become more evident and detectable at the region posterior to the cephalic furrow and in the hindgut primordium. The AD disappears as gastrulation proceeds, while the PD remains. At stage 15, the AD appears again in the foregut, and PD expression in the hindgut and anal pad. In imaginal disks, it is ubiquitously expressed in both males and females in genital and eye-antennal disks. Not expressed in the brain. In genital disks, it is expressed along the margin of the anterior bulbus in males, while in females it is expressed in the posterior compartment along the anterior-posterior border, with medial expansion in the most posterior region.

The protein localises to the nucleus. Transcription factor required for terminalia development. Negative regulator of the JAK/STAT pathway: represses JAK/STAT-dependent expression of ventral veins lacking (vvl) in the posterior spiracles. The polypeptide is Transcription factor Ken (ken) (Drosophila melanogaster (Fruit fly)).